The chain runs to 369 residues: tRNA/tmRNA (uracil-C(5))-methyltransferase (369 aa).

Positions 190, 218, 223, 239, and 301 each coordinate S-adenosyl-L-methionine. Catalysis depends on Cys326, which acts as the Nucleophile. Catalysis depends on Glu360, which acts as the Proton acceptor.

This sequence belongs to the class I-like SAM-binding methyltransferase superfamily. RNA M5U methyltransferase family. TrmA subfamily.

It carries out the reaction uridine(54) in tRNA + S-adenosyl-L-methionine = 5-methyluridine(54) in tRNA + S-adenosyl-L-homocysteine + H(+). It catalyses the reaction uridine(341) in tmRNA + S-adenosyl-L-methionine = 5-methyluridine(341) in tmRNA + S-adenosyl-L-homocysteine + H(+). Functionally, dual-specificity methyltransferase that catalyzes the formation of 5-methyluridine at position 54 (m5U54) in all tRNAs, and that of position 341 (m5U341) in tmRNA (transfer-mRNA). This is tRNA/tmRNA (uracil-C(5))-methyltransferase from Vibrio parahaemolyticus serotype O3:K6 (strain RIMD 2210633).